The following is an 80-amino-acid chain: Gamma-conotoxin PnVIIA (80 aa).

Positions 1–19 (MEKLTILLLVAAVLMSTQA) are cleaved as a signal peptide. A propeptide spanning residues 20–43 (QNQEQRQQAKINFLSKRKPSAERW) is cleaved from the precursor. Cystine bridges form between Cys-47–Cys-61, Cys-54–Cys-65, and Cys-60–Cys-70. Glu-59 is modified (4-carboxyglutamate). Residue Glu-71 is modified to 4-carboxyglutamate. The residue at position 76 (Pro-76) is a 4-hydroxyproline. Positions 78–80 (FGA) are excised as a propeptide.

Expressed by the venom duct.

It is found in the secreted. Its function is as follows. Gamma-conotoxins may act on voltage-gated non-specific cation pacemaker channels (HCN). Triggers depolarization and firing of action potential bursts in the caudodorsal neurons of lymnaea. This effect is due to activation or enhancement of a slow inward cation current that may underlie endogenous bursting activity of these neurons. The polypeptide is Gamma-conotoxin PnVIIA (Conus pennaceus (Feathered cone)).